A 594-amino-acid chain; its full sequence is Isocitrate dehydrogenase kinase/phosphatase (594 aa).

ATP contacts are provided by residues 315 to 321 (APGIRGM) and lysine 336. Aspartate 371 is an active-site residue.

Belongs to the AceK family.

Its subcellular location is the cytoplasm. The catalysed reaction is L-seryl-[isocitrate dehydrogenase] + ATP = O-phospho-L-seryl-[isocitrate dehydrogenase] + ADP + H(+). Its function is as follows. Bifunctional enzyme which can phosphorylate or dephosphorylate isocitrate dehydrogenase (IDH) on a specific serine residue. This is a regulatory mechanism which enables bacteria to bypass the Krebs cycle via the glyoxylate shunt in response to the source of carbon. When bacteria are grown on glucose, IDH is fully active and unphosphorylated, but when grown on acetate or ethanol, the activity of IDH declines drastically concomitant with its phosphorylation. The sequence is that of Isocitrate dehydrogenase kinase/phosphatase from Klebsiella pneumoniae subsp. pneumoniae (strain ATCC 700721 / MGH 78578).